The following is a 449-amino-acid chain: Protein cortex (449 aa).

WD repeat units follow at residues Thr108–Gly148, Tyr149–Ser188, Asn198–Arg237, Asp283–Thr327, Thr345–Gly382, and Ser386–Lys425. The D-box signature appears at Ser386–Ser397.

It belongs to the WD repeat CORT family.

It localises to the cytoplasm. Controls wing pigmentation patterning by regulating scale cell development, thereby playing a key role in mimicry and crypsis. Probably acts as an activator of the anaphase promoting complex/cyclosome (APC/C) that promotes the ubiquitin ligase activity and substrate specificity of the APC/C. This chain is Protein cortex, found in Heliconius erato (Crimson patched longwing butterfly).